The sequence spans 399 residues: Probable WRKY transcription factor 48 (399 aa).

2 stretches are compositionally biased toward basic and acidic residues: residues 1–11 and 19–38; these read MEKKKEEDHHH and KEIK…EQKQ. Disordered regions lie at residues 1 to 57 and 138 to 202; these read MEKK…TSSD and AESS…KNQK. The segment covering 143–161 has biased composition (low complexity); it reads VVNTTPTSPNSTSVSSSSN. The span at 162–171 shows a compositional bias: polar residues; it reads EAANDNNSGK. Residues 184 to 193 show a composition bias toward low complexity; sequence QQEQKGTKPQ. The WRKY DNA-binding region spans 215–280; the sequence is SDIDNLDDGY…YEGQHTHPFP (66 aa). The interval 361 to 399 is disordered; that stretch reads QASTSTSSSIRDHGLLQDILPSQIRSDTINTQTNEENKK. Over residues 383–399 the composition is skewed to polar residues; it reads QIRSDTINTQTNEENKK.

Its subcellular location is the nucleus. In terms of biological role, transcription factor. Interacts specifically with the W box (5'-(T)TGAC[CT]-3'), a frequently occurring elicitor-responsive cis-acting element. In Arabidopsis thaliana (Mouse-ear cress), this protein is Probable WRKY transcription factor 48 (WRKY48).